The sequence spans 220 residues: Fructose-6-phosphate aldolase (220 aa).

Catalysis depends on lysine 85, which acts as the Schiff-base intermediate with substrate.

The protein belongs to the transaldolase family. Type 3A subfamily. As to quaternary structure, homodecamer.

It is found in the cytoplasm. It catalyses the reaction beta-D-fructose 6-phosphate = dihydroxyacetone + D-glyceraldehyde 3-phosphate. Functionally, catalyzes the reversible formation of fructose 6-phosphate from dihydroxyacetone and D-glyceraldehyde 3-phosphate via an aldolization reaction. This chain is Fructose-6-phosphate aldolase, found in Salmonella arizonae (strain ATCC BAA-731 / CDC346-86 / RSK2980).